Reading from the N-terminus, the 647-residue chain is MKKEEYLEKVALANLWMRAYYEKDEPLASDEEYDALIRELRVFEEQNKDEVSKDSPTQKIAPTIQSEFKKIAHLKRMWSMEDVFDESELRAWAKRAKCEKNFFIEPKFDGASLNLLYENGKLVSGATRGDGEVGEDITLNVFEIENIPKNIAYKKRIEIRGEVVILKDDFEKINEKRALLNQSLFANPRNAASGSLRQLDTSITKERNLKFYPWGVGENTLNFTKHSEVMQFVRDLGFLKDDFIKLCANLDEVLKAYDELLTLREKKPMMMDGMVVRVDDLALCEELGYTVKFPKFMAAFKFPALEKTTRLIGINLQVGRSGVITPVAVLEPVNLDGVVVKSATLHNFDEIARLDVKINDFVSVIRSGDVIPKITKVFKERREGLEMEISHPKLCPTCQSELLDEGTLIKCQNIDCEDRLVNSIIHFVSKKCLNIDGLGENIVELLYKHKKITTLESIFHLKFSDFEGLEGFKEKKINNLLNAIEQARECELFRFITALGIEHIGEVAAKKLSLSFGKEWHKQSFEAYVNLEGFGEQMALSLCEFTRVNHTRIDEFYKLLNLKIEKLEVKSDSVIFGKTFVITGTLSRPRDEFKALIENLGGKVSGSVSKKTDYVLFGEEAGSKLSKAKELEVKCIDESAFNELVKE.

NAD(+) is bound by residues 30–34 (DEEYD), 79–80 (SM), and E105. K107 functions as the N6-AMP-lysine intermediate in the catalytic mechanism. Residues R128, E162, and K301 each contribute to the NAD(+) site. Positions 395, 398, 411, and 416 each coordinate Zn(2+). The BRCT domain occupies 570 to 647 (KSDSVIFGKT…ESAFNELVKE (78 aa)).

The protein belongs to the NAD-dependent DNA ligase family. LigA subfamily. The cofactor is Mg(2+). Mn(2+) serves as cofactor.

It catalyses the reaction NAD(+) + (deoxyribonucleotide)n-3'-hydroxyl + 5'-phospho-(deoxyribonucleotide)m = (deoxyribonucleotide)n+m + AMP + beta-nicotinamide D-nucleotide.. In terms of biological role, DNA ligase that catalyzes the formation of phosphodiester linkages between 5'-phosphoryl and 3'-hydroxyl groups in double-stranded DNA using NAD as a coenzyme and as the energy source for the reaction. It is essential for DNA replication and repair of damaged DNA. The chain is DNA ligase from Campylobacter jejuni subsp. doylei (strain ATCC BAA-1458 / RM4099 / 269.97).